Here is an 872-residue protein sequence, read N- to C-terminus: Chaperone protein ClpB 2 (872 aa).

A Clp R domain is found at 6–148; it reads PNQFTEKAWE…KNIIKQVRGS (143 aa). Repeat stretches follow at residues 9–73 and 85–148; these read FTEK…IQRQ and LGRS…VRGS. The interval 161–342 is NBD1; that stretch reads QSLEKYGRDL…RRFQQVYVDQ (182 aa). An ATP-binding site is contributed by 208-215; that stretch reads GEPGVGKT. Residues 343–551 are linker; sequence PSVEDTISIL…IAEIISKWTG (209 aa). Residues 393–527 adopt a coiled-coil conformation; sequence IDLVDEAAAR…TERELSQTQG (135 aa). The segment at 561–772 is NBD2; that stretch reads EKEKLLHLED…RIDEVIIFHS (212 aa). 611-618 serves as a coordination point for ATP; it reads GPTGVGKT. The interval 773 to 872 is C-terminal; sequence LDKKELRQIV…SRLPVEVFSS (100 aa).

This sequence belongs to the ClpA/ClpB family. As to quaternary structure, homohexamer. The oligomerization is ATP-dependent.

Its subcellular location is the cytoplasm. Functionally, part of a stress-induced multi-chaperone system, it is involved in the recovery of the cell from heat-induced damage, in cooperation with DnaK, DnaJ and GrpE. Acts before DnaK, in the processing of protein aggregates. Protein binding stimulates the ATPase activity; ATP hydrolysis unfolds the denatured protein aggregates, which probably helps expose new hydrophobic binding sites on the surface of ClpB-bound aggregates, contributing to the solubilization and refolding of denatured protein aggregates by DnaK. This Nostoc sp. (strain PCC 7120 / SAG 25.82 / UTEX 2576) protein is Chaperone protein ClpB 2 (clpB2).